The primary structure comprises 83 residues: MHTTTILICFFIFLVQVSTMDAHTDKYVRTLCGKTAIRNIANLCPPKPEMKGICSTGEYPSITEYCSMGFSDSQIKFMCCDNQ.

Residues 1–21 (MHTTTILICFFIFLVQVSTMD) form the signal peptide. Intrachain disulfides connect Cys32–Cys66, Cys44–Cys79, and Cys54–Cys80.

Belongs to the insulin family.

It localises to the secreted. In Caenorhabditis elegans, this protein is Probable insulin-like peptide alpha-type 2 (ins-22).